We begin with the raw amino-acid sequence, 197 residues long: Cell division protein SepF (197 aa).

2 disordered regions span residues 38 to 72 (MPTP…TTPT) and 164 to 197 (LSRE…AQAQ). Residues 58 to 72 (TVASNFAMNSNTTPT) are compositionally biased toward polar residues. The segment covering 170-185 (PATPAAPARPAAPAPA) has biased composition (low complexity).

It belongs to the SepF family. In terms of assembly, homodimer. Interacts with FtsZ.

The protein localises to the cytoplasm. In terms of biological role, cell division protein that is part of the divisome complex and is recruited early to the Z-ring. Probably stimulates Z-ring formation, perhaps through the cross-linking of FtsZ protofilaments. Its function overlaps with FtsA. The sequence is that of Cell division protein SepF from Picosynechococcus sp. (strain ATCC 27264 / PCC 7002 / PR-6) (Agmenellum quadruplicatum).